Reading from the N-terminus, the 343-residue chain is S-adenosylmethionine:tRNA ribosyltransferase-isomerase (343 aa).

This sequence belongs to the QueA family. Monomer.

It localises to the cytoplasm. It carries out the reaction 7-aminomethyl-7-carbaguanosine(34) in tRNA + S-adenosyl-L-methionine = epoxyqueuosine(34) in tRNA + adenine + L-methionine + 2 H(+). It participates in tRNA modification; tRNA-queuosine biosynthesis. In terms of biological role, transfers and isomerizes the ribose moiety from AdoMet to the 7-aminomethyl group of 7-deazaguanine (preQ1-tRNA) to give epoxyqueuosine (oQ-tRNA). This is S-adenosylmethionine:tRNA ribosyltransferase-isomerase from Borreliella burgdorferi (strain ATCC 35210 / DSM 4680 / CIP 102532 / B31) (Borrelia burgdorferi).